The following is a 234-amino-acid chain: Synaptogyrin-1 (234 aa).

Met-1 is modified (N-acetylmethionine). The Cytoplasmic portion of the chain corresponds to 1–23 (MEGGAYGAGKAGGAFDPYTLVRQ). The region spanning 20–173 (LVRQPHTILR…QAVLAFQRYQ (154 aa)) is the MARVEL domain. Residues 24–44 (PHTILRVVSWVFSIVVFGSIV) form a helical membrane-spanning segment. The Lumenal segment spans residues 45 to 71 (NEGYLNNPEEEEEFCIYNRNPNACSYG). A helical membrane pass occupies residues 72–92 (VTVGVLAFLTCLVYLALDVYF). Residues 93–104 (PQISSVKDRKKA) lie on the Cytoplasmic side of the membrane. Residues 105 to 125 (VLSDIGVSAFWAFFWFVGFCF) form a helical membrane-spanning segment. Residues 126–148 (LANQWQVSKPKDNPLNEGTDAAR) lie on the Lumenal side of the membrane. The helical transmembrane segment at 149–169 (AAIAFSFFSIFTWAGQAVLAF) threads the bilayer. Residues 170–234 (QRYQIGADSA…EPQGYQSQGY (65 aa)) lie on the Cytoplasmic side of the membrane. Positions 201–234 (EPSAGSDPTGMGGTYQHPANAFDAEPQGYQSQGY) are disordered.

The protein belongs to the synaptogyrin family. In terms of tissue distribution, nervous system (at protein level).

It is found in the cytoplasmic vesicle. The protein localises to the secretory vesicle. The protein resides in the synaptic vesicle membrane. Its subcellular location is the melanosome. Its function is as follows. May play a role in regulated exocytosis. Modulates the localization of synaptophysin/SYP into synaptic-like microvesicles and may therefore play a role in synaptic-like microvesicle formation and/or maturation. Involved in the regulation of short-term and long-term synaptic plasticity. In Rattus norvegicus (Rat), this protein is Synaptogyrin-1.